A 381-amino-acid polypeptide reads, in one-letter code: tRNA-cytidine(32) 2-sulfurtransferase (381 aa).

Residues 101–106 carry the PP-loop motif motif; it reads SGGKDS. Cys-176, Cys-179, and Cys-267 together coordinate [4Fe-4S] cluster.

Belongs to the TtcA family. In terms of assembly, homodimer. Requires Mg(2+) as cofactor. It depends on [4Fe-4S] cluster as a cofactor.

Its subcellular location is the cytoplasm. It catalyses the reaction cytidine(32) in tRNA + S-sulfanyl-L-cysteinyl-[cysteine desulfurase] + AH2 + ATP = 2-thiocytidine(32) in tRNA + L-cysteinyl-[cysteine desulfurase] + A + AMP + diphosphate + H(+). It participates in tRNA modification. In terms of biological role, catalyzes the ATP-dependent 2-thiolation of cytidine in position 32 of tRNA, to form 2-thiocytidine (s(2)C32). The sulfur atoms are provided by the cysteine/cysteine desulfurase (IscS) system. This chain is tRNA-cytidine(32) 2-sulfurtransferase, found in Psychrobacter cryohalolentis (strain ATCC BAA-1226 / DSM 17306 / VKM B-2378 / K5).